We begin with the raw amino-acid sequence, 209 residues long: Protein-L-isoaspartate O-methyltransferase (209 aa).

S60 is a catalytic residue.

The protein belongs to the methyltransferase superfamily. L-isoaspartyl/D-aspartyl protein methyltransferase family.

The protein localises to the cytoplasm. The enzyme catalyses [protein]-L-isoaspartate + S-adenosyl-L-methionine = [protein]-L-isoaspartate alpha-methyl ester + S-adenosyl-L-homocysteine. In terms of biological role, catalyzes the methyl esterification of L-isoaspartyl residues in peptides and proteins that result from spontaneous decomposition of normal L-aspartyl and L-asparaginyl residues. It plays a role in the repair and/or degradation of damaged proteins. The protein is Protein-L-isoaspartate O-methyltransferase of Methanococcus vannielii (strain ATCC 35089 / DSM 1224 / JCM 13029 / OCM 148 / SB).